Consider the following 319-residue polypeptide: Vomeronasal type-1 receptor 96 (319 aa).

Residues 1–19 (MNKVNILPSDTNIKITLFS) are Extracellular-facing. The helical transmembrane segment at 20-40 (EVSVGISANSVLFFAHLCMFF) threads the bilayer. At 41–49 (EENRSKPID) the chain is on the cytoplasmic side. The chain crosses the membrane as a helical span at residues 50-70 (LCIAFLSLTQLMLLVTMGLIA). At 71-93 (ADMFMSQGIWDSTTCRSIIYFHR) the chain is on the extracellular side. Cysteines 85 and 172 form a disulfide. The helical transmembrane segment at 94–114 (LLRGFNLCAACLLHILWTFTL) threads the bilayer. The Cytoplasmic segment spans residues 115-134 (SPRSSCLTKFKHKSPHHISC). Residues 135-155 (AFFSLCVLYMLFSSHLFVLII) form a helical membrane-spanning segment. Residues 156–193 (ATSNLTSDHFMYVTQSCSILPMSYSRTTMFSLVMVTRE) lie on the Extracellular side of the membrane. A glycan (N-linked (GlcNAc...) asparagine) is linked at N159. The helical transmembrane segment at 194–214 (AFLISLMALFSGYMVTLLWRH) threads the bilayer. Residues 215 to 238 (KKQVQHLHSTSLSSKSSPQQRATR) lie on the Cytoplasmic side of the membrane. Residues 239–259 (TILLLMSFFVVLYILDIVIFQ) traverse the membrane as a helical segment. At 260-269 (SRTKFKDGSM) the chain is on the extracellular side. Residues 270–290 (FYSLHIIVSHSYATISPFVFI) traverse the membrane as a helical segment. Topologically, residues 291 to 319 (FSDKRIIKFLGSMSGRIINICLFSDGYGP) are cytoplasmic.

Belongs to the G-protein coupled receptor 1 family.

The protein localises to the cell membrane. Its function is as follows. Putative pheromone receptor implicated in the regulation of social as well as reproductive behavior. This is Vomeronasal type-1 receptor 96 (Vom1r96) from Rattus norvegicus (Rat).